Consider the following 629-residue polypeptide: MSITLESAKEHANDLAVLCCRAEEGTVIGPSNLEDPAIFGDLEDSGLLTIPANCLKIGEVLGAKLVKTADSLTPLTPELLEGVNSISEEAPKQEASAPVEAPVAEVAPAAMPVANVTGSMLKIHIGEGKDINLEIPLTIAGQMGVVAPTAAAPAGVAMPVASATEQVVAPAGEPKLVRTLQKKHFKIEKVEFGPETKIENNTIYIRENICEDAVKVSNLVTDIKVEIITPADYGKYSETIMDVQPIATKEGDGKIGQGVTRVIDGAIIMVTGTDEDGVQIGEFGSSEGELDANIMWGRPGAPDKGEILIKTQVTIKAGTNMERPGPLAAHKATDFITQEIREALKKLDDSEVVETEELAQYRRPGKKKVVIIKEIMGQGAMHDNLILPVEPVGVIGAKPNVDLGNVPVVLSPLEVLDGGIHALTCIGPASKENSRHYWREPLVIEVMNDEEFDLAGVVFVGSPQVNAEKFYVSERLGMLVETMDVEGAFITTEGFGNNHIDFASHHEQVGMRGIPVVGMSFCAVQGALVVGNKYMKYMVDNNKSEQGIENEILSNNTLCPEDAIRAVAMLKAAIAEEEVKVAERKFNKNVKENNVDLIEEQAGKEITLLPNEQVLPMSKKRKEIYEADK.

The active-site Covalent intermediate with substrate; via pyruvic acid is Cys425. Cys425 is subject to Pyruvic acid (Cys).

Consists of 3 subunits of 23, 26 and 45 kDa (alpha, gamma and beta respectively). The molecular weight of the complex is approximately 870 kDa, suggesting a decameric structure, if all 3 subunits are present in equal stoichiometry. The peptide chain is cleaved into beta and alpha chains, and the alpha chain N-terminal cysteine is deaminated and oxidized to form a reactive pyruvoyl group.

Its subcellular location is the cytoplasm. The catalysed reaction is [PrdC protein]-Se-L-selenocysteinyl-S-L-cysteine + 5-aminopentanoate = [PrdC protein]-L-selenocysteine/L-cysteine + D-proline. Its function is as follows. D-proline reductase catalyzes the reductive cleavage of a C-N bond in D-proline resulting in the formation of 5-aminovalerate. The alpha subunit has been shown to bind D-proline, presumably via the pyruvoyl group. The protein is D-proline reductase proprotein PrdA (prdA) of Acetoanaerobium sticklandii (strain ATCC 12662 / DSM 519 / JCM 1433 / CCUG 9281 / NCIMB 10654 / HF) (Clostridium sticklandii).